The primary structure comprises 352 residues: MSILAEKLSSILKRYDELTALLSSAEVVSDIKKLTELSKEQSSIEEISIASKEYLSVLENIKENKELLEDKELSELAKEELKILEIQKSDLETAIKQLLIPKDPNDDKNIYLELRAGTGGDEAGIFVGDLFKAYCRYADLKKWKVEIVSSSENSVGGYKEIIALIKGKGVYSRLKFEAGTHRVQRVPETESQGRIHTSAITVAIMPEVDDVEVSINPSDLKIEVFRAGGHGGQCVNTTDSAVRITHLPTNISVSMQDEKSQHKNKDKALKILKARLYEKQIEEQQLANAKDRKEQVGSGDRSERIRTYNYPQNRLSEHRINLTLYSLEEIMLSGNLDEVINPLIAHAQSQFE.

Gln-233 bears the N5-methylglutamine mark. Positions 288 to 309 (NAKDRKEQVGSGDRSERIRTYN) are disordered. The span at 289-306 (AKDRKEQVGSGDRSERIR) shows a compositional bias: basic and acidic residues.

It belongs to the prokaryotic/mitochondrial release factor family. Post-translationally, methylated by PrmC. Methylation increases the termination efficiency of RF1.

The protein localises to the cytoplasm. Its function is as follows. Peptide chain release factor 1 directs the termination of translation in response to the peptide chain termination codons UAG and UAA. This is Peptide chain release factor 1 (prfA) from Helicobacter pylori (strain ATCC 700392 / 26695) (Campylobacter pylori).